The primary structure comprises 150 residues: Siroheme decarboxylase NirD subunit (150 aa).

This sequence belongs to the Ahb/Nir family. In terms of assembly, probably forms a complex composed of NirD, NirL, NirG and NirH. All proteins are required for the total conversion of siroheme to didecarboxysiroheme.

It carries out the reaction siroheme + 2 H(+) = 12,18-didecarboxysiroheme + 2 CO2. It functions in the pathway porphyrin-containing compound metabolism. In terms of biological role, involved in heme d1 biosynthesis. Catalyzes the decarboxylation of siroheme into didecarboxysiroheme. In Pseudomonas aeruginosa (strain ATCC 15692 / DSM 22644 / CIP 104116 / JCM 14847 / LMG 12228 / 1C / PRS 101 / PAO1), this protein is Siroheme decarboxylase NirD subunit.